The chain runs to 307 residues: Methionyl-tRNA formyltransferase (307 aa).

108 to 111 (SLLP) contributes to the (6S)-5,6,7,8-tetrahydrofolate binding site.

This sequence belongs to the Fmt family.

The enzyme catalyses L-methionyl-tRNA(fMet) + (6R)-10-formyltetrahydrofolate = N-formyl-L-methionyl-tRNA(fMet) + (6S)-5,6,7,8-tetrahydrofolate + H(+). Attaches a formyl group to the free amino group of methionyl-tRNA(fMet). The formyl group appears to play a dual role in the initiator identity of N-formylmethionyl-tRNA by promoting its recognition by IF2 and preventing the misappropriation of this tRNA by the elongation apparatus. The sequence is that of Methionyl-tRNA formyltransferase from Xanthomonas euvesicatoria pv. vesicatoria (strain 85-10) (Xanthomonas campestris pv. vesicatoria).